Here is a 355-residue protein sequence, read N- to C-terminus: Fructose-1,6-bisphosphatase class 1 (355 aa).

Residues Glu-90, Asp-109, Leu-111, and Asp-112 each contribute to the Mg(2+) site. Residues 112 to 115, Asn-204, and 256 to 258 each bind substrate; these read DGSS and YLY. Residue Glu-276 participates in Mg(2+) binding.

The protein belongs to the FBPase class 1 family. In terms of assembly, homotetramer. Mg(2+) is required as a cofactor.

It is found in the cytoplasm. The catalysed reaction is beta-D-fructose 1,6-bisphosphate + H2O = beta-D-fructose 6-phosphate + phosphate. The protein operates within carbohydrate biosynthesis; gluconeogenesis. The sequence is that of Fructose-1,6-bisphosphatase class 1 from Acidiphilium cryptum (strain JF-5).